Here is an 83-residue protein sequence, read N- to C-terminus: Cobrotoxin homolog (83 aa).

Positions 1–21 (METLLLTLLVVTIVCLDLGYT) are cleaved as a signal peptide. Disulfide bonds link Cys24-Cys45, Cys38-Cys62, Cys64-Cys75, and Cys76-Cys81.

It belongs to the three-finger toxin family. Short-chain subfamily. Type I alpha-neurotoxin sub-subfamily. Expressed by the venom gland.

It localises to the secreted. Its function is as follows. Binds to muscle nicotinic acetylcholine receptor (nAChR) and inhibit acetylcholine from binding to the receptor, thereby impairing neuromuscular transmission. In Naja naja (Indian cobra), this protein is Cobrotoxin homolog.